The following is a 161-amino-acid chain: Protein-export protein SecB (161 aa).

The protein belongs to the SecB family. As to quaternary structure, homotetramer, a dimer of dimers. One homotetramer interacts with 1 SecA dimer.

The protein localises to the cytoplasm. One of the proteins required for the normal export of preproteins out of the cell cytoplasm. It is a molecular chaperone that binds to a subset of precursor proteins, maintaining them in a translocation-competent state. It also specifically binds to its receptor SecA. The protein is Protein-export protein SecB of Shewanella baltica (strain OS223).